The primary structure comprises 116 residues: NADH-ubiquinone oxidoreductase chain 3 (116 aa).

The next 3 helical transmembrane spans lie at 8–28 (VAATALISLILAFVAFWLPSL), 56–76 (FFLVAILFLLFDLEIALLLPL), and 87–107 (ISLLWATSIIILLTLGLIYEW).

Belongs to the complex I subunit 3 family.

It is found in the mitochondrion membrane. The enzyme catalyses a ubiquinone + NADH + 5 H(+)(in) = a ubiquinol + NAD(+) + 4 H(+)(out). Its function is as follows. Core subunit of the mitochondrial membrane respiratory chain NADH dehydrogenase (Complex I) that is believed to belong to the minimal assembly required for catalysis. Complex I functions in the transfer of electrons from NADH to the respiratory chain. The immediate electron acceptor for the enzyme is believed to be ubiquinone. The sequence is that of NADH-ubiquinone oxidoreductase chain 3 (MT-ND3) from Squalus acanthias (Spiny dogfish).